The chain runs to 396 residues: Phosphoglycerate kinase (396 aa).

Substrate contacts are provided by residues 23-25, R38, 61-64, R122, and R155; these read DFN and HMGK. ATP-binding positions include K206, G296, E327, and 353–356; that span reads GGDS.

Belongs to the phosphoglycerate kinase family. As to quaternary structure, monomer.

It localises to the cytoplasm. The enzyme catalyses (2R)-3-phosphoglycerate + ATP = (2R)-3-phospho-glyceroyl phosphate + ADP. It functions in the pathway carbohydrate degradation; glycolysis; pyruvate from D-glyceraldehyde 3-phosphate: step 2/5. This Clostridium botulinum (strain Alaska E43 / Type E3) protein is Phosphoglycerate kinase.